The primary structure comprises 357 residues: Fulicin peptides (357 aa).

A signal peptide spans 1–17; that stretch reads MQPTVLLILMTSCLTYQ. Residues 18–119 constitute a propeptide that is removed on maturation; it reads VIADKPKGNH…VDGSQGHLEP (102 aa). Asparagine 123 is modified (D-asparagine). Valine 126 bears the Valine amide mark. The propeptide occupies 130–194; the sequence is NTLPEEAGSF…YNTMNEDEAS (65 aa). Residues valine 201 and valine 209 each carry the valine amide modification. 2 positions are modified to leucine amide: leucine 217 and leucine 226. Isoleucine 233 and isoleucine 242 each carry isoleucine amide. 2 positions are modified to valine amide: valine 250 and valine 259. Residues 263–298 constitute a propeptide that is removed on maturation; that stretch reads NQGVFTVSPSSTKISFDDNYLPYLSSVDAGDLSDVN. Leucine 305 carries the leucine amide modification. A propeptide spanning residues 311–357 is cleaved from the precursor; it reads TAEQDETSQRSNERLVALLQNTGFRKRLSRMLQNQRLVEHYPEFIGK.

Found in central ganglia and the ventricles and atria of the heart.

Potentiates tetanic contraction of the penis retractor muscle at very low concentrations, and also shows modulatory actions on the activity of the buccal and ventricular muscles and the central ganglionic neurons. The polypeptide is Fulicin peptides (Lissachatina fulica (Giant African land snail)).